The sequence spans 325 residues: Eukaryotic translation initiation factor 3 subunit I (325 aa).

WD repeat units lie at residues 8–47, 50–91, 144–183, and 186–225; these read GHER…RLGT, GHTG…ALLK, CNDS…VLVN, and EHSR…HQKT. Threonine 219 carries the post-translational modification Phosphothreonine. Lysine 264 is modified (N6-acetyllysine). A Glycyl lysine isopeptide (Lys-Gly) (interchain with G-Cter in ubiquitin) cross-link involves residue lysine 282. The WD 5 repeat unit spans residues 283-324; it reads GHFGPINSVAFHPDGKSYSSGGEDGYVRIHYFDPQYFEFEFE. A Phosphotyrosine modification is found at tyrosine 308.

This sequence belongs to the eIF-3 subunit I family. As to quaternary structure, component of the eukaryotic translation initiation factor 3 (eIF-3) complex, which is composed of 13 subunits: EIF3A, EIF3B, EIF3C, EIF3D, EIF3E, EIF3F, EIF3G, EIF3H, EIF3I, EIF3J, EIF3K, EIF3L and EIF3M. The eIF-3 complex appears to include 3 stable modules: module A is composed of EIF3A, EIF3B, EIF3G and EIF3I; module B is composed of EIF3F, EIF3H, and EIF3M; and module C is composed of EIF3C, EIF3D, EIF3E, EIF3K and EIF3L. EIF3C of module C binds EIF3B of module A and EIF3H of module B, thereby linking the three modules. EIF3J is a labile subunit that binds to the eIF-3 complex via EIF3B. The eIF-3 complex interacts with RPS6KB1 under conditions of nutrient depletion. Mitogenic stimulation leads to binding and activation of a complex composed of MTOR and RPTOR, leading to phosphorylation and release of RPS6KB1 and binding of EIF4B to eIF-3. Post-translationally, phosphorylated by TGF-beta type II receptor.

It is found in the cytoplasm. Component of the eukaryotic translation initiation factor 3 (eIF-3) complex, which is required for several steps in the initiation of protein synthesis. The eIF-3 complex associates with the 40S ribosome and facilitates the recruitment of eIF-1, eIF-1A, eIF-2:GTP:methionyl-tRNAi and eIF-5 to form the 43S pre-initiation complex (43S PIC). The eIF-3 complex stimulates mRNA recruitment to the 43S PIC and scanning of the mRNA for AUG recognition. The eIF-3 complex is also required for disassembly and recycling of post-termination ribosomal complexes and subsequently prevents premature joining of the 40S and 60S ribosomal subunits prior to initiation. The eIF-3 complex specifically targets and initiates translation of a subset of mRNAs involved in cell proliferation, including cell cycling, differentiation and apoptosis, and uses different modes of RNA stem-loop binding to exert either translational activation or repression. This is Eukaryotic translation initiation factor 3 subunit I from Bos taurus (Bovine).